Reading from the N-terminus, the 141-residue chain is Transcription antitermination protein NusB (141 aa).

Belongs to the NusB family.

Involved in transcription antitermination. Required for transcription of ribosomal RNA (rRNA) genes. Binds specifically to the boxA antiterminator sequence of the ribosomal RNA (rrn) operons. The polypeptide is Transcription antitermination protein NusB (Clostridium botulinum (strain Loch Maree / Type A3)).